The sequence spans 148 residues: Large-conductance mechanosensitive channel (148 aa).

Transmembrane regions (helical) follow at residues 9-29 and 79-99; these read AFAVKGNVVDMAVGIIIGAAF and IQTVIDFIIVAFAIFMGVKAI.

Belongs to the MscL family. Homopentamer.

The protein resides in the cell inner membrane. In terms of biological role, channel that opens in response to stretch forces in the membrane lipid bilayer. May participate in the regulation of osmotic pressure changes within the cell. This chain is Large-conductance mechanosensitive channel, found in Pseudomonas syringae pv. syringae (strain B728a).